The chain runs to 518 residues: 3-octaprenyl-4-hydroxybenzoate carboxy-lyase (518 aa).

Position 177 (Asn177) interacts with Mn(2+). Prenylated FMN contacts are provided by residues 180–182 (IYR), 194–196 (RWL), and 199–200 (RG). Glu243 is a binding site for Mn(2+). The active-site Proton donor is the Asp318.

It belongs to the UbiD family. In terms of assembly, homohexamer. Prenylated FMN serves as cofactor. It depends on Mn(2+) as a cofactor.

The protein localises to the cell membrane. It catalyses the reaction a 4-hydroxy-3-(all-trans-polyprenyl)benzoate + H(+) = a 2-(all-trans-polyprenyl)phenol + CO2. Its pathway is cofactor biosynthesis; ubiquinone biosynthesis. Catalyzes the decarboxylation of 3-octaprenyl-4-hydroxy benzoate to 2-octaprenylphenol, an intermediate step in ubiquinone biosynthesis. The polypeptide is 3-octaprenyl-4-hydroxybenzoate carboxy-lyase (Burkholderia lata (strain ATCC 17760 / DSM 23089 / LMG 22485 / NCIMB 9086 / R18194 / 383)).